Consider the following 178-residue polypeptide: 6,7-dimethyl-8-ribityllumazine synthase (178 aa).

5-amino-6-(D-ribitylamino)uracil is bound by residues Tyr-27, 58-60, and 82-84; these read SLE and CVI. (2S)-2-hydroxy-3-oxobutyl phosphate is bound at residue 87-88; the sequence is AT. His-90 serves as the catalytic Proton donor. A 5-amino-6-(D-ribitylamino)uracil-binding site is contributed by Asn-114. Position 128 (Arg-128) interacts with (2S)-2-hydroxy-3-oxobutyl phosphate.

The protein belongs to the DMRL synthase family.

The catalysed reaction is (2S)-2-hydroxy-3-oxobutyl phosphate + 5-amino-6-(D-ribitylamino)uracil = 6,7-dimethyl-8-(1-D-ribityl)lumazine + phosphate + 2 H2O + H(+). It functions in the pathway cofactor biosynthesis; riboflavin biosynthesis; riboflavin from 2-hydroxy-3-oxobutyl phosphate and 5-amino-6-(D-ribitylamino)uracil: step 1/2. In terms of biological role, catalyzes the formation of 6,7-dimethyl-8-ribityllumazine by condensation of 5-amino-6-(D-ribitylamino)uracil with 3,4-dihydroxy-2-butanone 4-phosphate. This is the penultimate step in the biosynthesis of riboflavin. This is 6,7-dimethyl-8-ribityllumazine synthase from Jannaschia sp. (strain CCS1).